The primary structure comprises 207 residues: Segregation and condensation protein B (207 aa).

The protein belongs to the ScpB family. Homodimer. Homodimerization may be required to stabilize the binding of ScpA to the Smc head domains. Component of a cohesin-like complex composed of ScpA, ScpB and the Smc homodimer, in which ScpA and ScpB bind to the head domain of Smc. The presence of the three proteins is required for the association of the complex with DNA.

It is found in the cytoplasm. Its function is as follows. Participates in chromosomal partition during cell division. May act via the formation of a condensin-like complex containing Smc and ScpA that pull DNA away from mid-cell into both cell halves. This chain is Segregation and condensation protein B, found in Mycoplasma genitalium (strain ATCC 33530 / DSM 19775 / NCTC 10195 / G37) (Mycoplasmoides genitalium).